The sequence spans 580 residues: Methyl-CpG-binding domain protein 4 (580 aa).

A disordered region spans residues 1–36; sequence MGTTGLESLSLGDRGAAPTVTSSERLVPDPPNDLRK. The region spanning 76-148 is the MBD domain; the sequence is ATAGTECRKS…EDFDFTVLSK (73 aa). 2 positions are modified to phosphoserine: Ser-318 and Ser-428. Asp-560 is a catalytic residue.

Interacts with MLH1.

The protein resides in the nucleus. Mismatch-specific DNA N-glycosylase involved in DNA repair. Has thymine glycosylase activity and is specific for G:T mismatches within methylated and unmethylated CpG sites. Can also remove uracil or 5-fluorouracil in G:U mismatches. Has no lyase activity. Was first identified as methyl-CpG-binding protein. The sequence is that of Methyl-CpG-binding domain protein 4 from Homo sapiens (Human).